A 286-amino-acid chain; its full sequence is ATP synthase gamma chain (286 aa).

The protein belongs to the ATPase gamma chain family. As to quaternary structure, F-type ATPases have 2 components, CF(1) - the catalytic core - and CF(0) - the membrane proton channel. CF(1) has five subunits: alpha(3), beta(3), gamma(1), delta(1), epsilon(1). CF(0) has three main subunits: a, b and c.

The protein resides in the cell inner membrane. Functionally, produces ATP from ADP in the presence of a proton gradient across the membrane. The gamma chain is believed to be important in regulating ATPase activity and the flow of protons through the CF(0) complex. This is ATP synthase gamma chain from Pseudomonas savastanoi pv. phaseolicola (strain 1448A / Race 6) (Pseudomonas syringae pv. phaseolicola (strain 1448A / Race 6)).